The chain runs to 840 residues: Probable alpha-glucuronidase A (840 aa).

An N-terminal signal peptide occupies residues M1 to A19. N-linked (GlcNAc...) asparagine glycans are attached at residues N50, N149, N222, N262, N279, N310, N465, N527, N576, N610, N682, N723, and N732.

Belongs to the glycosyl hydrolase 67 family.

Its subcellular location is the secreted. The enzyme catalyses an alpha-D-glucuronoside + H2O = D-glucuronate + an alcohol. Its function is as follows. Alpha-glucuronidase involved in the hydrolysis of xylan, a major structural heterogeneous polysaccharide found in plant biomass representing the second most abundant polysaccharide in the biosphere, after cellulose. Releases 4-O-methylglucuronic acid from xylan. In Aspergillus fumigatus (strain CBS 144.89 / FGSC A1163 / CEA10) (Neosartorya fumigata), this protein is Probable alpha-glucuronidase A (aguA).